The following is a 188-amino-acid chain: Ion-translocating oxidoreductase complex subunit G (188 aa).

The Cytoplasmic portion of the chain corresponds to 1 to 9 (MSDSKEITK). A helical transmembrane segment spans residues 10–30 (VIVTMVVISAVAAALLALTYT). Residues 31-188 (PTQAQLKLLQ…AVDYVSAQEG (158 aa)) are Extracellular-facing. FMN phosphoryl threonine is present on T166.

Belongs to the RnfG family. As to quaternary structure, the Rnf complex is probably composed of eight subunits, including RnfA, RnfB, RnfC, RnfD, RnfE and RnfG. FMN is required as a cofactor.

The protein resides in the cell membrane. In terms of biological role, part of a membrane-bound complex that couples electron transfer with translocation of ions across the membrane. Catalyzes Na(+) transport, most probably coupled to electron transfer from reduced ferredoxin to methanophenazine and heterodisulfide reductase. Involved in heterodisulfide reduction during methanogenesis from acetate. The chain is Ion-translocating oxidoreductase complex subunit G from Methanosarcina acetivorans (strain ATCC 35395 / DSM 2834 / JCM 12185 / C2A).